Here is a 679-residue protein sequence, read N- to C-terminus: Glycine--tRNA ligase beta subunit (679 aa).

The protein belongs to the class-II aminoacyl-tRNA synthetase family. In terms of assembly, tetramer of two alpha and two beta subunits.

Its subcellular location is the cytoplasm. The enzyme catalyses tRNA(Gly) + glycine + ATP = glycyl-tRNA(Gly) + AMP + diphosphate. The sequence is that of Glycine--tRNA ligase beta subunit from Streptococcus pyogenes serotype M3 (strain ATCC BAA-595 / MGAS315).